We begin with the raw amino-acid sequence, 633 residues long: tRNA uridine 5-carboxymethylaminomethyl modification enzyme MnmG (633 aa).

FAD-binding positions include 15-20, Val127, and Ser182; that span reads GAGHAG. 276–290 is an NAD(+) binding site; sequence GPRYCPSIEDKIVRF. FAD is bound at residue Gln373.

The protein belongs to the MnmG family. As to quaternary structure, homodimer. Heterotetramer of two MnmE and two MnmG subunits. Requires FAD as cofactor.

The protein resides in the cytoplasm. In terms of biological role, NAD-binding protein involved in the addition of a carboxymethylaminomethyl (cmnm) group at the wobble position (U34) of certain tRNAs, forming tRNA-cmnm(5)s(2)U34. The polypeptide is tRNA uridine 5-carboxymethylaminomethyl modification enzyme MnmG (Streptococcus thermophilus (strain CNRZ 1066)).